The following is a 95-amino-acid chain: Cell division protein FtsB (95 aa).

At 1–3 (MRL) the chain is on the cytoplasmic side. The chain crosses the membrane as a helical span at residues 4–21 (FILILSAILLLFQYDLWF). Over 22-95 (GKNGYLDYKE…RIAKENKDNR (74 aa)) the chain is Periplasmic. Positions 28–62 (DYKETAEEIAMHKAENTKLSQRNQVVAAEIRDLKD) form a coiled coil.

This sequence belongs to the FtsB family. In terms of assembly, part of a complex composed of FtsB, FtsL and FtsQ.

It is found in the cell inner membrane. In terms of biological role, essential cell division protein. May link together the upstream cell division proteins, which are predominantly cytoplasmic, with the downstream cell division proteins, which are predominantly periplasmic. The polypeptide is Cell division protein FtsB (Mannheimia succiniciproducens (strain KCTC 0769BP / MBEL55E)).